A 1020-amino-acid polypeptide reads, in one-letter code: Protein translocase subunit SecA (1020 aa).

ATP is bound by residues Gln143, Gly161–Thr165, and Asp661. The disordered stretch occupies residues Ser974–Pro1020. Zn(2+)-binding residues include Cys1004, Cys1006, Cys1015, and His1016.

Belongs to the SecA family. Monomer and homodimer. Part of the essential Sec protein translocation apparatus which comprises SecA, SecYEG and auxiliary proteins SecDF. Other proteins may also be involved. Zn(2+) serves as cofactor.

The protein localises to the cell inner membrane. The protein resides in the cytoplasm. It catalyses the reaction ATP + H2O + cellular proteinSide 1 = ADP + phosphate + cellular proteinSide 2.. In terms of biological role, part of the Sec protein translocase complex. Interacts with the SecYEG preprotein conducting channel. Has a central role in coupling the hydrolysis of ATP to the transfer of proteins into and across the cell membrane, serving as an ATP-driven molecular motor driving the stepwise translocation of polypeptide chains across the membrane. The sequence is that of Protein translocase subunit SecA from Chlorobium phaeovibrioides (strain DSM 265 / 1930) (Prosthecochloris vibrioformis (strain DSM 265)).